Reading from the N-terminus, the 533-residue chain is Zinc finger protein 692 (533 aa).

2 disordered regions span residues 124 to 251 (SLIP…PATL) and 290 to 310 (TESL…TCDE). Basic and acidic residues predominate over residues 149-178 (EARRKQEAEGLECEHRERTQETRLSRRVEP). Positions 190 to 208 (QVVEEEEEEEEEEEEEELL) are enriched in acidic residues. At serine 233 the chain carries Phosphoserine. Positions 290–305 (TESLDSPGSQAQSAPN) are enriched in polar residues. C2H2-type zinc fingers lie at residues 329–354 (MPCD…KYQH), 360–384 (FCCP…VKLH), 390–412 (YICE…RRIH), 418–440 (LQCE…RRKH), and 449–472 (FPCE…SKSH). Phosphoserine is present on serine 471. Positions 478–533 (VQESPGSLGSSPSISAPEPLQSPEGTSFSTSYDSNPAPSTSISSPGVPAPRNTEKS) are disordered. The segment covering 481–492 (SPGSLGSSPSIS) has biased composition (low complexity). A compositionally biased stretch (polar residues) spans 500-521 (PEGTSFSTSYDSNPAPSTSISS).

It belongs to the krueppel C2H2-type zinc-finger protein family. Phosphorylation at Ser-471 results in loss of DNA-binding activity.

It is found in the nucleus. Functionally, may act as an transcriptional repressor for PCK1 gene expression, in turns may participate in the hepatic gluconeogenesis regulation through the activated AMPK signaling pathway. The protein is Zinc finger protein 692 of Rattus norvegicus (Rat).